The chain runs to 181 residues: NADH-quinone oxidoreductase subunit I (181 aa).

2 4Fe-4S ferredoxin-type domains span residues 44 to 74 (LNRY…VEGA) and 90 to 119 (RVYQ…MTND). Residues Cys54, Cys57, Cys60, Cys64, Cys99, Cys102, Cys105, and Cys109 each coordinate [4Fe-4S] cluster.

The protein belongs to the complex I 23 kDa subunit family. As to quaternary structure, NDH-1 is composed of 14 different subunits. Subunits NuoA, H, J, K, L, M, N constitute the membrane sector of the complex. [4Fe-4S] cluster is required as a cofactor.

The protein localises to the cell membrane. It carries out the reaction a quinone + NADH + 5 H(+)(in) = a quinol + NAD(+) + 4 H(+)(out). Functionally, NDH-1 shuttles electrons from NADH, via FMN and iron-sulfur (Fe-S) centers, to quinones in the respiratory chain. The immediate electron acceptor for the enzyme in this species is believed to be menaquinone. Couples the redox reaction to proton translocation (for every two electrons transferred, four hydrogen ions are translocated across the cytoplasmic membrane), and thus conserves the redox energy in a proton gradient. In Mycobacterium marinum (strain ATCC BAA-535 / M), this protein is NADH-quinone oxidoreductase subunit I.